Reading from the N-terminus, the 163-residue chain is Single-stranded DNA-binding protein 2 (163 aa).

The region spanning 1–104 (MINNVVLVGR…VVADNFQMLE (104 aa)) is the SSB domain. The tract at residues 109–163 (REGGSTGSFNGGFNNNTSSSNSYSAPAQQTPNFGRDDSPFGNSNPMDISDDDLPF) is disordered. Over residues 119–130 (GGFNNNTSSSNS) the composition is skewed to low complexity. Residues 131 to 140 (YSAPAQQTPN) are compositionally biased toward polar residues. Positions 158-163 (DDDLPF) match the Important for interaction with partner proteins motif.

Homotetramer.

Functionally, plays an important role in DNA replication, recombination and repair. Binds to ssDNA and to an array of partner proteins to recruit them to their sites of action during DNA metabolism. The polypeptide is Single-stranded DNA-binding protein 2 (ssb2) (Streptococcus pyogenes serotype M18 (strain MGAS8232)).